The sequence spans 982 residues: Ubiquitin carboxyl-terminal hydrolase 37 (982 aa).

The KEN box 1 motif lies at 32–34; it reads KEN. Short sequence motifs (D-box) lie at residues 71–79 and 96–105; these read RLMLTLQDN and RLFLDAVHQN. At S115 the chain carries Phosphoserine. Residues 128–162 are disordered; sequence RTSQKETHRQLSYSDNQVSSKRGSLETKDDIPFRK. The span at 137–149 shows a compositional bias: polar residues; the sequence is QLSYSDNQVSSKR. The segment covering 150–160 has biased composition (basic and acidic residues); it reads GSLETKDDIPF. The D-box 3 motif lies at 161-169; that stretch reads RKVLGNPGR. S171 carries the phosphoserine modification. The segment covering 183–201 has biased composition (low complexity); that stretch reads TRTIPSLTSTSTPLRSGLL. Residues 183–307 are disordered; the sequence is TRTIPSLTST…TPSAKRSLGF (125 aa). Residue S213 is modified to Phosphoserine. A KEN box 2 motif is present at residues 224 to 226; the sequence is KEN. Positions 246-260 are enriched in basic and acidic residues; that stretch reads SREKQLSLKQSEENR. The span at 282 to 301 shows a compositional bias: polar residues; sequence YSPSSTNLDRTNISSQTPSA. Positions 343–954 constitute a USP domain; the sequence is QGFSNLGNTC…SGYIFFYMHK (612 aa). The active-site Nucleophile is the C352. S631 carries the post-translational modification Phosphoserine; by CDK2. Phosphoserine occurs at positions 653 and 655. 2 disordered regions span residues 672 to 705 and 720 to 798; these read ISSS…GFDA and KREA…GEVD. Composition is skewed to basic and acidic residues over residues 684 to 698 and 720 to 735; these read KDSK…KSEL and KREA…DDKP. The UIM 1 domain occupies 707 to 726; it reads SEEELLAAVLEISKREASPS. S773 carries the post-translational modification Phosphoserine. Positions 777 to 789 are enriched in basic and acidic residues; the sequence is ITKDCDENKENKT. A KEN box 3 motif is present at residues 785 to 787; it reads KEN. UIM domains follow at residues 809–828 and 831–850; these read REEQ…QEAW and KEDD…FNNS. Residue H909 is the Proton acceptor of the active site.

The protein belongs to the peptidase C19 family. As to quaternary structure, interacts with FZR1/CDH1. Interacts with CDT1. Post-translationally, polyubiquitinated via 'Lys-11'-linked ubiquitin by the APC(CDH1) complex during late mitosis, leading to its degradation. Able to mediate auto-deubiquitination. In terms of processing, phosphorylated at Ser-631 by CDK2 during G1/S phase but not during mitosis; phosphorylation at Ser-631 is required for deubiquitinase activity. Also polyubiquitinated during early G1 phase, without leading to degradation. Phosphorylated at Ser-115 by ATM following DNA damage, which in turn increases its deubiquitination activity towards BLM.

It is found in the nucleus. The protein localises to the chromosome. The catalysed reaction is Thiol-dependent hydrolysis of ester, thioester, amide, peptide and isopeptide bonds formed by the C-terminal Gly of ubiquitin (a 76-residue protein attached to proteins as an intracellular targeting signal).. In terms of biological role, deubiquitinase that plays a role in different processes including cell cycle regulation, DNA replication or DNA damage response. Antagonizes the anaphase-promoting complex (APC/C) during G1/S transition by mediating deubiquitination of cyclin-A (CCNA1 and CCNA2), thereby promoting S phase entry. Specifically mediates deubiquitination of 'Lys-11'-linked polyubiquitin chains, a specific ubiquitin-linkage type mediated by the APC/C complex. Phosphorylation at Ser-628 during G1/S phase maximizes the deubiquitinase activity, leading to prevent degradation of cyclin-A (CCNA1 and CCNA2). Plays an important role in the regulation of DNA replication by stabilizing the licensing factor CDT1. Also plays an essential role beyond S-phase entry to promote the efficiency and fidelity of replication by deubiquitinating checkpoint kinase 1/CHK1, promoting its stability. Sustains the DNA damage response (DDR) by deubiquitinating and stabilizing the ATP-dependent DNA helicase BLM. Mechanistically, DNA double-strand breaks (DSB) promotes ATM-mediated phosphorylation of USP37 and enhances the binding between USP37 and BLM. Promotes cell migration by deubiquitinating and stabilizing the epithelial-mesenchymal transition (EMT)-inducing transcription factor SNAI. Plays a role in the regulation of mitotic spindle assembly and mitotic progression by associating with chromatin-associated WAPL and stabilizing it through deubiquitination. This is Ubiquitin carboxyl-terminal hydrolase 37 (USP37) from Sus scrofa (Pig).